The chain runs to 84 residues: Cytochrome b559 subunit alpha (84 aa).

A helical membrane pass occupies residues 22-36; the sequence is IIHIPAITILFASGF. Position 24 (His-24) interacts with heme.

This sequence belongs to the PsbE/PsbF family. Heterodimer of an alpha subunit and a beta subunit. PSII is composed of 1 copy each of membrane proteins PsbA, PsbB, PsbC, PsbD, PsbE, PsbF, PsbH, PsbI, PsbJ, PsbK, PsbL, PsbM, PsbT, PsbX, Psb30/Ycf12, peripheral proteins PsbO, CyanoQ (PsbQ), PsbU, PsbV and a large number of cofactors. It forms dimeric complexes. Heme b serves as cofactor.

The protein resides in the cell inner membrane. Its function is as follows. This b-type cytochrome is tightly associated with the reaction center of photosystem II (PSII). PSII is a light-driven water:plastoquinone oxidoreductase that uses light energy to abstract electrons from H(2)O, generating O(2) and a proton gradient subsequently used for ATP formation. It consists of a core antenna complex that captures photons, and an electron transfer chain that converts photonic excitation into a charge separation. The sequence is that of Cytochrome b559 subunit alpha from Gloeobacter violaceus (strain ATCC 29082 / PCC 7421).